The sequence spans 660 residues: Bifunctional polymyxin resistance protein ArnA (660 aa).

Positions Met1–Leu304 are formyltransferase ArnAFT. His86 to Ile88 lines the (6R)-10-formyltetrahydrofolate pocket. His104 functions as the Proton donor; for formyltransferase activity in the catalytic mechanism. Residues Arg114 and Val136–Asp140 contribute to the (6R)-10-formyltetrahydrofolate site. Positions Arg314–Ser660 are dehydrogenase ArnADH. NAD(+) is bound by residues Asp347 and Asp368–Ile369. UDP-alpha-D-glucuronate-binding positions include Ala393, Tyr398, and Thr432–Ser433. Glu434 functions as the Proton acceptor; for decarboxylase activity in the catalytic mechanism. Residues Arg460, Asn492, Lys526–Arg535, and Tyr613 contribute to the UDP-alpha-D-glucuronate site. Arg619 functions as the Proton donor; for decarboxylase activity in the catalytic mechanism.

The protein in the N-terminal section; belongs to the Fmt family. UDP-L-Ara4N formyltransferase subfamily. In the C-terminal section; belongs to the NAD(P)-dependent epimerase/dehydratase family. UDP-glucuronic acid decarboxylase subfamily. As to quaternary structure, homohexamer, formed by a dimer of trimers.

The catalysed reaction is UDP-alpha-D-glucuronate + NAD(+) = UDP-beta-L-threo-pentopyranos-4-ulose + CO2 + NADH. It catalyses the reaction UDP-4-amino-4-deoxy-beta-L-arabinose + (6R)-10-formyltetrahydrofolate = UDP-4-deoxy-4-formamido-beta-L-arabinose + (6S)-5,6,7,8-tetrahydrofolate + H(+). The protein operates within nucleotide-sugar biosynthesis; UDP-4-deoxy-4-formamido-beta-L-arabinose biosynthesis; UDP-4-deoxy-4-formamido-beta-L-arabinose from UDP-alpha-D-glucuronate: step 1/3. It participates in nucleotide-sugar biosynthesis; UDP-4-deoxy-4-formamido-beta-L-arabinose biosynthesis; UDP-4-deoxy-4-formamido-beta-L-arabinose from UDP-alpha-D-glucuronate: step 3/3. It functions in the pathway bacterial outer membrane biogenesis; lipopolysaccharide biosynthesis. Functionally, bifunctional enzyme that catalyzes the oxidative decarboxylation of UDP-glucuronic acid (UDP-GlcUA) to UDP-4-keto-arabinose (UDP-Ara4O) and the addition of a formyl group to UDP-4-amino-4-deoxy-L-arabinose (UDP-L-Ara4N) to form UDP-L-4-formamido-arabinose (UDP-L-Ara4FN). The modified arabinose is attached to lipid A and is required for resistance to polymyxin and cationic antimicrobial peptides. The chain is Bifunctional polymyxin resistance protein ArnA from Escherichia coli O157:H7.